The sequence spans 66 residues: Large ribosomal subunit protein bL33c (66 aa).

Belongs to the bacterial ribosomal protein bL33 family.

The protein resides in the plastid. Its subcellular location is the chloroplast. This Platanus occidentalis (Sycamore) protein is Large ribosomal subunit protein bL33c.